The sequence spans 25 residues: uncharacterized protein (25 aa).

The protein resides in the plastid. Its subcellular location is the chloroplast. This is an uncharacterized protein from Trieres chinensis (Marine centric diatom).